The sequence spans 184 residues: MREYKLVVLGSGGVGKSALTVQFVQGIFVEKYDPTIEDSYRKQVEVDAQQCMLEILDTAGTEQFTAMRDLYMKNGQGFALVYSITAQSTFNDLQDLREQILRVKDTDDVPMILVGNKCDLEDERVVGKEQGQNLARQWNNCAFLESSAKSKINVNEIFYDLVRQINRKTPVPGKARKKSSCQLL.

A GTP-binding site is contributed by 10–18 (GSGGVGKSA). The tract at residues 25 to 67 (QGIFVEKYDPTIEDSYRKQVEVDAQQCMLEILDTAGTEQFTAM) is interaction with KRIT1. The Effector region motif lies at 32 to 40 (YDPTIEDSY). GTP contacts are provided by residues 57 to 61 (DTAGT), 116 to 119 (NKCD), and 147 to 149 (SAK). Serine 179 bears the Phosphoserine; by PKA mark. Cysteine 181 is modified (cysteine methyl ester). Cysteine 181 carries S-geranylgeranyl cysteine lipidation. The propeptide at 182 to 184 (QLL) is removed in mature form.

In terms of assembly, heterodimer with RAP1GAP. Interacts with EPAC2. Interacts with SGSM1. Interacts with SGSM2. Interacts with SGSM3. Interacts with KRIT1. Interacts with RAP1GDS1.

It is found in the cell membrane. Its subcellular location is the cytoplasm. The protein resides in the cytosol. The protein localises to the cell junction. The enzyme catalyses GTP + H2O = GDP + phosphate + H(+). Its activity is regulated as follows. Activated by guanine nucleotide-exchange factor (GEF) EPAC2 in a cAMP-dependent manner. Its function is as follows. GTP-binding protein that possesses intrinsic GTPase activity. Contributes to the polarizing activity of KRIT1 and CDH5 in the establishment and maintenance of correct endothelial cell polarity and vascular lumen. Required for the localization of phosphorylated PRKCZ, PARD3 and TIAM1 to the cell junction. Plays a role in the establishment of basal endothelial barrier function. The sequence is that of Ras-related protein Rap-1b (RAP1B) from Bos taurus (Bovine).